Reading from the N-terminus, the 1297-residue chain is Phosphoribosylformylglycinamidine synthase (1297 aa).

Residues 307 to 318 (GASTGSGGEIRD) and alanine 678 contribute to the ATP site. Glutamate 718, asparagine 722, and aspartate 886 together coordinate Mg(2+). Positions 1044–1297 (MAILREQGVN…MFQNARKYFG (254 aa)) constitute a Glutamine amidotransferase type-1 domain. The active-site Nucleophile is cysteine 1137. Residues histidine 1262 and glutamate 1264 contribute to the active site.

In the N-terminal section; belongs to the FGAMS family. In terms of assembly, monomer.

The protein resides in the cytoplasm. The catalysed reaction is N(2)-formyl-N(1)-(5-phospho-beta-D-ribosyl)glycinamide + L-glutamine + ATP + H2O = 2-formamido-N(1)-(5-O-phospho-beta-D-ribosyl)acetamidine + L-glutamate + ADP + phosphate + H(+). Its pathway is purine metabolism; IMP biosynthesis via de novo pathway; 5-amino-1-(5-phospho-D-ribosyl)imidazole from N(2)-formyl-N(1)-(5-phospho-D-ribosyl)glycinamide: step 1/2. In terms of biological role, phosphoribosylformylglycinamidine synthase involved in the purines biosynthetic pathway. Catalyzes the ATP-dependent conversion of formylglycinamide ribonucleotide (FGAR) and glutamine to yield formylglycinamidine ribonucleotide (FGAM) and glutamate. The protein is Phosphoribosylformylglycinamidine synthase of Vibrio cholerae serotype O1 (strain ATCC 39315 / El Tor Inaba N16961).